A 173-amino-acid polypeptide reads, in one-letter code: uncharacterized protein (173 aa).

The propeptide at 1 to 15 (MERKLSQRAGNTFKG) is leader sequence. Phe-16 carries the N-methylphenylalanine modification. Residues 16–37 (FTLVEVLITLAIISLVFSLILI) traverse the membrane as a helical segment.

It localises to the membrane. This is an uncharacterized protein from Aquifex aeolicus (strain VF5).